The following is a 264-amino-acid chain: Thiazole synthase (264 aa).

The Schiff-base intermediate with DXP role is filled by lysine 106. 1-deoxy-D-xylulose 5-phosphate-binding positions include glycine 167, 193 to 194, and 215 to 216; these read AG and NS.

It belongs to the ThiG family. Homotetramer. Forms heterodimers with either ThiH or ThiS.

The protein localises to the cytoplasm. It catalyses the reaction [ThiS sulfur-carrier protein]-C-terminal-Gly-aminoethanethioate + 2-iminoacetate + 1-deoxy-D-xylulose 5-phosphate = [ThiS sulfur-carrier protein]-C-terminal Gly-Gly + 2-[(2R,5Z)-2-carboxy-4-methylthiazol-5(2H)-ylidene]ethyl phosphate + 2 H2O + H(+). Its pathway is cofactor biosynthesis; thiamine diphosphate biosynthesis. Catalyzes the rearrangement of 1-deoxy-D-xylulose 5-phosphate (DXP) to produce the thiazole phosphate moiety of thiamine. Sulfur is provided by the thiocarboxylate moiety of the carrier protein ThiS. In vitro, sulfur can be provided by H(2)S. The chain is Thiazole synthase from Prochlorococcus marinus (strain MIT 9215).